The sequence spans 262 residues: Translation initiation factor 2 subunit alpha (262 aa).

Positions 15 to 86 (GELVVGTVHK…RKGHVDVSMK (72 aa)) constitute an S1 motif domain.

It belongs to the eIF-2-alpha family. In terms of assembly, heterotrimer composed of an alpha, a beta and a gamma chain.

EIF-2 functions in the early steps of protein synthesis by forming a ternary complex with GTP and initiator tRNA. The polypeptide is Translation initiation factor 2 subunit alpha (eif2a) (Methanothermobacter thermautotrophicus (strain ATCC 29096 / DSM 1053 / JCM 10044 / NBRC 100330 / Delta H) (Methanobacterium thermoautotrophicum)).